Consider the following 154-residue polypeptide: uncharacterized protein (154 aa).

The 137-residue stretch at 7–143 folds into the HTH marR-type domain; sequence RSELEKTAVQ…IFSFVGKAAD (137 aa). A DNA-binding region (H-T-H motif) is located at residues 57 to 80; the sequence is AGELGKKTGLSTGSVTALVDRLEK.

This is an uncharacterized protein from Bacillus subtilis (strain 168).